The primary structure comprises 578 residues: Translation initiation factor eIF2B subunit gamma (578 aa).

2 positions are modified to phosphoserine: S296 and S300. 2 disordered regions span residues 298–337 and 535–578; these read QASFKDPFTGNQQQQNPPTTDDDEDRNHDDDDDYKPSATS and DDSV…LFER. Residue T306 is modified to Phosphothreonine. The span at 544–578 shows a compositional bias: acidic residues; the sequence is EIAEETDSDDRSDEDSDDSEYTDEYEYEDDGLFER.

This sequence belongs to the eIF-2B gamma/epsilon subunits family. In terms of assembly, component of the translation initiation factor 2B (eIF2B) complex which is a heterodecamer of two sets of five different subunits: alpha, beta, gamma, delta and epsilon. Subunits alpha, beta and delta comprise a regulatory subcomplex and subunits epsilon and gamma comprise a catalytic subcomplex. Within the complex, the hexameric regulatory complex resides at the center, with the two heterodimeric catalytic subcomplexes bound on opposite sides.

The protein resides in the cytoplasm. Its subcellular location is the cytosol. Acts as a component of the translation initiation factor 2B (eIF2B) complex, which catalyzes the exchange of GDP for GTP on the eukaryotic initiation factor 2 (eIF2) complex gamma subunit. Its guanine nucleotide exchange factor activity is repressed when bound to eIF2 complex phosphorylated on the alpha subunit, thereby limiting the amount of methionyl-initiator methionine tRNA available to the ribosome and consequently global translation is repressed. It activates the synthesis of GCN4 in yeast under amino acid starvation conditions by suppressing the inhibitory effects of multiple AUG codons present in the leader of GCN4 mRNA. It may promote either repression or activation of GCN4 expression depending on amino acid availability. GCD1 stabilizes the interaction between eIF2 and GCD6 and stimulates the catalytic activity in vitro. The sequence is that of Translation initiation factor eIF2B subunit gamma (GCD1) from Saccharomyces cerevisiae (strain ATCC 204508 / S288c) (Baker's yeast).